The sequence spans 430 residues: Tol-Pal system protein TolB (430 aa).

The signal sequence occupies residues 1–21 (MKQALRVAFGFLMLWAAVLHA).

It belongs to the TolB family. As to quaternary structure, the Tol-Pal system is composed of five core proteins: the inner membrane proteins TolA, TolQ and TolR, the periplasmic protein TolB and the outer membrane protein Pal. They form a network linking the inner and outer membranes and the peptidoglycan layer.

It is found in the periplasm. In terms of biological role, part of the Tol-Pal system, which plays a role in outer membrane invagination during cell division and is important for maintaining outer membrane integrity. TolB occupies a key intermediary position in the Tol-Pal system because it communicates directly with both membrane-embedded components, Pal in the outer membrane and TolA in the inner membrane. This Salmonella choleraesuis (strain SC-B67) protein is Tol-Pal system protein TolB.